A 1005-amino-acid polypeptide reads, in one-letter code: Protein TIC 214 (1005 aa).

Helical transmembrane passes span 25–45 (VGLY…LFLL), 67–87 (FFTG…HLAL), 91–111 (HTIL…SNSG), 131–151 (SFQL…SVLG), 177–197 (FVGW…VFVW), and 304–324 (LFSI…PLLY). Disordered stretches follow at residues 457–481 (VEEG…EREE) and 767–833 (KKKK…KRKQ). Over residues 783–810 (KQKKVKSKQKKVKSKQKKVKSKQKKVKS) the composition is skewed to basic residues. Positions 811–824 (KQNEIKSKQNEIKS) are enriched in basic and acidic residues.

This sequence belongs to the TIC214 family. Part of the Tic complex.

It localises to the plastid. The protein localises to the chloroplast inner membrane. Its function is as follows. Involved in protein precursor import into chloroplasts. May be part of an intermediate translocation complex acting as a protein-conducting channel at the inner envelope. This Oenothera berteroana (Bertero's evening primrose) protein is Protein TIC 214.